A 700-amino-acid chain; its full sequence is Phosphoribosylformylglycinamidine synthase subunit PurL (700 aa).

Histidine 34 is a catalytic residue. Tyrosine 37 provides a ligand contact to ATP. Glutamate 79 is a binding site for Mg(2+). Residues 80-83 (SHNH) and arginine 102 contribute to the substrate site. Residue histidine 81 is the Proton acceptor of the active site. A Mg(2+)-binding site is contributed by aspartate 103. A substrate-binding site is contributed by glutamine 227. Residue aspartate 255 participates in Mg(2+) binding. 299–301 (ESQ) is a binding site for substrate. ATP is bound by residues aspartate 476 and glycine 513. A Mg(2+)-binding site is contributed by asparagine 514. Serine 516 provides a ligand contact to substrate.

This sequence belongs to the FGAMS family. Monomer. Part of the FGAM synthase complex composed of 1 PurL, 1 PurQ and 2 PurS subunits.

It localises to the cytoplasm. It catalyses the reaction N(2)-formyl-N(1)-(5-phospho-beta-D-ribosyl)glycinamide + L-glutamine + ATP + H2O = 2-formamido-N(1)-(5-O-phospho-beta-D-ribosyl)acetamidine + L-glutamate + ADP + phosphate + H(+). Its pathway is purine metabolism; IMP biosynthesis via de novo pathway; 5-amino-1-(5-phospho-D-ribosyl)imidazole from N(2)-formyl-N(1)-(5-phospho-D-ribosyl)glycinamide: step 1/2. Functionally, part of the phosphoribosylformylglycinamidine synthase complex involved in the purines biosynthetic pathway. Catalyzes the ATP-dependent conversion of formylglycinamide ribonucleotide (FGAR) and glutamine to yield formylglycinamidine ribonucleotide (FGAM) and glutamate. The FGAM synthase complex is composed of three subunits. PurQ produces an ammonia molecule by converting glutamine to glutamate. PurL transfers the ammonia molecule to FGAR to form FGAM in an ATP-dependent manner. PurS interacts with PurQ and PurL and is thought to assist in the transfer of the ammonia molecule from PurQ to PurL. The chain is Phosphoribosylformylglycinamidine synthase subunit PurL from Halobacterium salinarum (strain ATCC 29341 / DSM 671 / R1).